A 134-amino-acid chain; its full sequence is Small ribosomal subunit protein bS6 (134 aa).

It belongs to the bacterial ribosomal protein bS6 family.

Its function is as follows. Binds together with bS18 to 16S ribosomal RNA. This chain is Small ribosomal subunit protein bS6, found in Pelodictyon phaeoclathratiforme (strain DSM 5477 / BU-1).